A 310-amino-acid polypeptide reads, in one-letter code: Carbamate kinase-like protein YqeA (310 aa).

This sequence belongs to the carbamate kinase family.

The chain is Carbamate kinase-like protein YqeA (yqeA) from Escherichia coli (strain K12).